A 155-amino-acid chain; its full sequence is Putative pre-16S rRNA nuclease (155 aa).

It belongs to the YqgF nuclease family.

It localises to the cytoplasm. Could be a nuclease involved in processing of the 5'-end of pre-16S rRNA. The chain is Putative pre-16S rRNA nuclease from Xanthomonas oryzae pv. oryzae (strain MAFF 311018).